A 169-amino-acid polypeptide reads, in one-letter code: Small ribosomal subunit protein uS9 (169 aa).

Disordered regions lie at residues 1–29 (MVEPTGIEDVQEYDENSEEYPAEYTTETP) and 128–169 (MDPE…YSKR). Residues 9 to 21 (DVQEYDENSEEYP) are compositionally biased toward acidic residues. The span at 150–169 (VERKKAGLKKARKAPQYSKR) shows a compositional bias: basic residues.

Belongs to the universal ribosomal protein uS9 family.

The protein is Small ribosomal subunit protein uS9 of Thermobifida fusca (strain YX).